The sequence spans 488 residues: Aspartyl/glutamyl-tRNA(Asn/Gln) amidotransferase subunit B (488 aa).

The protein belongs to the GatB/GatE family. GatB subfamily. Heterotrimer of A, B and C subunits.

The catalysed reaction is L-glutamyl-tRNA(Gln) + L-glutamine + ATP + H2O = L-glutaminyl-tRNA(Gln) + L-glutamate + ADP + phosphate + H(+). It catalyses the reaction L-aspartyl-tRNA(Asn) + L-glutamine + ATP + H2O = L-asparaginyl-tRNA(Asn) + L-glutamate + ADP + phosphate + 2 H(+). In terms of biological role, allows the formation of correctly charged Asn-tRNA(Asn) or Gln-tRNA(Gln) through the transamidation of misacylated Asp-tRNA(Asn) or Glu-tRNA(Gln) in organisms which lack either or both of asparaginyl-tRNA or glutaminyl-tRNA synthetases. The reaction takes place in the presence of glutamine and ATP through an activated phospho-Asp-tRNA(Asn) or phospho-Glu-tRNA(Gln). The polypeptide is Aspartyl/glutamyl-tRNA(Asn/Gln) amidotransferase subunit B (Ralstonia pickettii (strain 12J)).